A 132-amino-acid polypeptide reads, in one-letter code: Nuclear transition protein 2 (132 aa).

Residues 1–20 are compositionally biased toward polar residues; it reads MDTKTQSLPNTHAQPHSNSR. The interval 1-132 is disordered; sequence MDTKTQSLPN…KRQSSGRKYN (132 aa). Positions 12, 16, 24, 29, 31, and 35 each coordinate Zn(2+). A compositionally biased stretch (basic residues) spans 37-59; that stretch reads SRSRSRSCRSRSSSRRPRSHRSP. Residues 82–94 are compositionally biased toward polar residues; the sequence is SHQCPSRPVTHSC. The Nuclear localization signal motif lies at 105 to 113; that stretch reads GKVIKRKQV. Residues 108–132 show a composition bias toward basic residues; that stretch reads IKRKQVKRSKQVYKRKRQSSGRKYN. The residue at position 127 (Ser-127) is a Phosphoserine.

This sequence belongs to the nuclear transition protein 2 family. Testis.

Its subcellular location is the nucleus. The protein resides in the nucleolus. It localises to the chromosome. Functionally, plays a key role in the replacement of histones to protamine in the elongating spermatids of mammals. In condensing spermatids, loaded onto the nucleosomes, where it promotes the recruitment and processing of protamines, which are responsible for histone eviction. The sequence is that of Nuclear transition protein 2 (TNP2) from Bos taurus (Bovine).